The following is a 309-amino-acid chain: 4-hydroxy-tetrahydrodipicolinate synthase (309 aa).

T51 provides a ligand contact to pyruvate. Catalysis depends on Y140, which acts as the Proton donor/acceptor. Residue K168 is the Schiff-base intermediate with substrate of the active site. I209 serves as a coordination point for pyruvate.

It belongs to the DapA family. In terms of assembly, homotetramer; dimer of dimers.

It localises to the cytoplasm. The catalysed reaction is L-aspartate 4-semialdehyde + pyruvate = (2S,4S)-4-hydroxy-2,3,4,5-tetrahydrodipicolinate + H2O + H(+). Its pathway is amino-acid biosynthesis; L-lysine biosynthesis via DAP pathway; (S)-tetrahydrodipicolinate from L-aspartate: step 3/4. In terms of biological role, catalyzes the condensation of (S)-aspartate-beta-semialdehyde [(S)-ASA] and pyruvate to 4-hydroxy-tetrahydrodipicolinate (HTPA). In Streptococcus uberis (strain ATCC BAA-854 / 0140J), this protein is 4-hydroxy-tetrahydrodipicolinate synthase.